We begin with the raw amino-acid sequence, 298 residues long: Tyrosine recombinase XerC (298 aa).

Residues 1 to 84 (MNHIQEAFLN…TLRTFYEYWM (84 aa)) enclose the Core-binding (CB) domain. Positions 105–286 (YLPQFFYEEE…SNQQLRKVYL (182 aa)) constitute a Tyr recombinase domain. Residues arginine 145, lysine 169, histidine 238, arginine 241, and histidine 264 contribute to the active site. Tyrosine 273 functions as the O-(3'-phospho-DNA)-tyrosine intermediate in the catalytic mechanism.

The protein belongs to the 'phage' integrase family. XerC subfamily. As to quaternary structure, forms a cyclic heterotetrameric complex composed of two molecules of XerC and two molecules of XerD.

The protein localises to the cytoplasm. Functionally, site-specific tyrosine recombinase, which acts by catalyzing the cutting and rejoining of the recombining DNA molecules. The XerC-XerD complex is essential to convert dimers of the bacterial chromosome into monomers to permit their segregation at cell division. It also contributes to the segregational stability of plasmids. This chain is Tyrosine recombinase XerC, found in Staphylococcus aureus (strain MRSA252).